The chain runs to 354 residues: Serum paraoxonase/lactonase 3 (354 aa).

A disulfide bond links cysteine 42 and cysteine 352. N-linked (GlcNAc...) asparagine glycosylation occurs at asparagine 50. The Ca(2+) site is built by glutamate 53 and aspartate 54. Histidine 114 functions as the Proton acceptor in the catalytic mechanism. Residue isoleucine 116 participates in Ca(2+) binding. At serine 165 the chain carries Phosphoserine. Ca(2+) contacts are provided by asparagine 167, aspartate 168, asparagine 223, aspartate 268, and asparagine 269. N-linked (GlcNAc...) asparagine glycosylation is found at asparagine 269 and asparagine 323.

This sequence belongs to the paraoxonase family. As to quaternary structure, homodimer. The cofactor is Ca(2+). Glycosylated. Post-translationally, the signal sequence is not cleaved.

Its subcellular location is the secreted. It is found in the extracellular space. The catalysed reaction is a phenyl acetate + H2O = a phenol + acetate + H(+). The enzyme catalyses An aryl dialkyl phosphate + H2O = dialkyl phosphate + an aryl alcohol.. It carries out the reaction an N-acyl-L-homoserine lactone + H2O = an N-acyl-L-homoserine + H(+). Has low activity towards the organophosphate paraxon and aromatic carboxylic acid esters. Rapidly hydrolyzes lactones such as statin prodrugs (e.g. lovastatin). Hydrolyzes aromatic lactones and 5- or 6-member ring lactones with aliphatic substituents but not simple lactones or those with polar substituents. The protein is Serum paraoxonase/lactonase 3 (Pon3) of Mus musculus (Mouse).